We begin with the raw amino-acid sequence, 173 residues long: NADH-ubiquinone oxidoreductase chain 6 (173 aa).

5 helical membrane passes run 1 to 21, 27 to 47, 48 to 68, 87 to 107, and 139 to 159; these read MTYF…AVAS, YGVV…LSLG, VSFV…VVFV, VVGY…VGGL, and CGVG…FVVL.

It belongs to the complex I subunit 6 family.

It localises to the mitochondrion membrane. The enzyme catalyses a ubiquinone + NADH + 5 H(+)(in) = a ubiquinol + NAD(+) + 4 H(+)(out). In terms of biological role, core subunit of the mitochondrial membrane respiratory chain NADH dehydrogenase (Complex I) that is believed to belong to the minimal assembly required for catalysis. Complex I functions in the transfer of electrons from NADH to the respiratory chain. The immediate electron acceptor for the enzyme is believed to be ubiquinone. This chain is NADH-ubiquinone oxidoreductase chain 6 (MT-ND6), found in Larus canus (Common gull).